Here is a 162-residue protein sequence, read N- to C-terminus: Peroxiredoxin-2B (162 aa).

The Thioredoxin domain occupies 4–162 (IAVGDVVPDG…SSADDILKAL (159 aa)). Cys51 serves as the catalytic Cysteine sulfenic acid (-SOH) intermediate.

Belongs to the peroxiredoxin family. Prx5 subfamily. Monomer. Expressed in all tissues but mostly in reproductive tissues such as buds, flowers, siliques and seeds.

Its subcellular location is the cytoplasm. The catalysed reaction is [glutaredoxin]-dithiol + a hydroperoxide = [glutaredoxin]-disulfide + an alcohol + H2O. Functionally, reduces hydrogen peroxide and alkyl hydroperoxides with reducing equivalents provided through the thioredoxin or glutaredoxin system. May be involved in intracellular redox signaling. In terms of biological role, thiol-specific peroxidase that catalyzes the reduction of hydrogen peroxide and organic hydroperoxides to water and alcohols, respectively. Plays a role in cell protection against oxidative stress by detoxifying peroxides and as sensor of hydrogen peroxide-mediated signaling events. The protein is Peroxiredoxin-2B (PRXIIB) of Arabidopsis thaliana (Mouse-ear cress).